The following is a 252-amino-acid chain: Transcriptional regulatory protein HptR (252 aa).

Residues 3–118 (KVVICDDERI…QLEVILGRLV (116 aa)) form the Response regulatory domain. Asp55 is modified (4-aspartylphosphate). The HTH araC/xylS-type domain maps to 153-250 (NQIVDQIKQS…QMSPSDYCKQ (98 aa)). 2 DNA-binding regions (H-T-H motif) span residues 170-191 (SDLIQHIDVSESYAMRTFKDHV) and 217-240 (HYEIADKVGFSEYKMFSYHFKKYL).

Post-translationally, phosphorylated by HptS.

Its subcellular location is the cytoplasm. In terms of biological role, member of the two-component regulatory system HptS/HptR that regulates genes involved in hexose phosphate transport system in response to changes in extracellular phosphate sources. Activates uhpT expression to facilitate glucose-6-phosphate/G6P utilization by directly binding to its promoter. Antagonizes CcpA-dependent transcription of a subset of CcpA-regulated genes involved in antibiotic susceptibility. The polypeptide is Transcriptional regulatory protein HptR (hptR) (Staphylococcus aureus (strain MRSA252)).